A 247-amino-acid polypeptide reads, in one-letter code: Carboxy-S-adenosyl-L-methionine synthase (247 aa).

Residues tyrosine 40, 65-67, 90-91, 122-123, asparagine 137, and arginine 204 contribute to the S-adenosyl-L-methionine site; these read GSS, DN, and DI.

This sequence belongs to the class I-like SAM-binding methyltransferase superfamily. Cx-SAM synthase family. As to quaternary structure, homodimer.

It catalyses the reaction prephenate + S-adenosyl-L-methionine = carboxy-S-adenosyl-L-methionine + 3-phenylpyruvate + H2O. Catalyzes the conversion of S-adenosyl-L-methionine (SAM) to carboxy-S-adenosyl-L-methionine (Cx-SAM). In Pseudomonas fluorescens (strain SBW25), this protein is Carboxy-S-adenosyl-L-methionine synthase.